Consider the following 424-residue polypeptide: CUGBP Elav-like family member 4 (424 aa).

Residues 8–27 form a disordered region; it reads VANGQPDNSSLSSNPTGHMN. The span at 9–24 shows a compositional bias: polar residues; sequence ANGQPDNSSLSSNPTG. RRM domains are found at residues 47-128 and 342-417; these read IKLF…PADS and PQPP…LKRP.

Belongs to the CELF/BRUNOL family.

The protein localises to the nucleus. It localises to the cytoplasm. Functionally, RNA-binding protein that may be implicated in the regulation of pre-mRNA alternative splicing. In Xenopus tropicalis (Western clawed frog), this protein is CUGBP Elav-like family member 4 (celf4).